The chain runs to 139 residues: Small ribosomal subunit protein uS9 (139 aa).

The protein belongs to the universal ribosomal protein uS9 family.

This Coxiella burnetii (strain CbuK_Q154) (Coxiella burnetii (strain Q154)) protein is Small ribosomal subunit protein uS9.